Here is a 454-residue protein sequence, read N- to C-terminus: Kynurenine--oxoglutarate transaminase 3 (454 aa).

Residue F2 is modified to N-acetylserine. Residue G71 participates in substrate binding. An N6-acetyllysine; alternate modification is found at K116. K116 is subject to N6-succinyllysine; alternate. Substrate is bound at residue N218. K280 is modified (N6-(pyridoxal phosphate)lysine). R429 contributes to the substrate binding site.

This sequence belongs to the class-I pyridoxal-phosphate-dependent aminotransferase family. As to quaternary structure, homodimer. Pyridoxal 5'-phosphate serves as cofactor.

The catalysed reaction is L-kynurenine + 2-oxoglutarate = kynurenate + L-glutamate + H2O. It carries out the reaction L-kynurenine + glyoxylate = kynurenate + glycine + H2O. The enzyme catalyses 3-hydroxy-L-kynurenine + glyoxylate = xanthurenate + glycine + H2O. It catalyses the reaction an S-substituted L-cysteine + H2O = a thiol + pyruvate + NH4(+). Its pathway is amino-acid degradation; L-kynurenine degradation; kynurenate from L-kynurenine: step 1/2. In terms of biological role, catalyzes the irreversible transamination of the L-tryptophan metabolite L-kynurenine to form kynurenic acid (KA), an intermediate in the tryptophan catabolic pathway which is also a broad spectrum antagonist of the three ionotropic excitatory amino acid receptors among others. May catalyze the beta-elimination of S-conjugates and Se-conjugates of L-(seleno)cysteine, resulting in the cleavage of the C-S or C-Se bond. Has transaminase activity towards L-kynurenine, tryptophan, phenylalanine, serine, cysteine, methionine, histidine, glutamine and asparagine with glyoxylate as an amino group acceptor (in vitro). Has lower activity with 2-oxoglutarate as amino group acceptor (in vitro). The protein is Kynurenine--oxoglutarate transaminase 3 of Homo sapiens (Human).